A 158-amino-acid polypeptide reads, in one-letter code: Small ribosomal subunit protein uS10m (158 aa).

Belongs to the universal ribosomal protein uS10 family.

It is found in the mitochondrion. This Caenorhabditis briggsae protein is Small ribosomal subunit protein uS10m (mrps-10).